The chain runs to 556 residues: Formate--tetrahydrofolate ligase (556 aa).

Residue 65–72 participates in ATP binding; sequence TPAGEGKS.

This sequence belongs to the formate--tetrahydrofolate ligase family.

It catalyses the reaction (6S)-5,6,7,8-tetrahydrofolate + formate + ATP = (6R)-10-formyltetrahydrofolate + ADP + phosphate. It participates in one-carbon metabolism; tetrahydrofolate interconversion. This is Formate--tetrahydrofolate ligase from Streptococcus pneumoniae serotype 19F (strain G54).